The primary structure comprises 84 residues: U8-theraphotoxin-Hhn1f (84 aa).

The first 21 residues, 1–21, serve as a signal peptide directing secretion; sequence MKVVLLVCLVWMMAMMELVSC. Cystine bridges form between Cys-23/Cys-35, Cys-29/Cys-44, Cys-34/Cys-67, Cys-54/Cys-75, and Cys-69/Cys-81.

It belongs to the AVIT (prokineticin) family. Expressed by the venom gland.

Its subcellular location is the secreted. This is U8-theraphotoxin-Hhn1f from Cyriopagopus hainanus (Chinese bird spider).